The sequence spans 23 residues: Caerin-4.1 (23 aa).

In terms of tissue distribution, expressed by the skin parotoid and/or rostral glands.

The protein localises to the secreted. Antibacterial peptide, that adopts an alpha helical conformation which can disrupt bacterial membranes. Each caerin displays a different antimicrobial specificity. In Ranoidea caerulea (Green tree frog), this protein is Caerin-4.1.